We begin with the raw amino-acid sequence, 301 residues long: t-SNARE affecting a late Golgi compartment protein 2 (301 aa).

Topologically, residues 1–279 (MAYRDRTGLY…SHQKNTGRLR (279 aa)) are cytoplasmic. The stretch at 92-120 (SDKTEQENEIQRLTIQITQDFQRCQKLLQ) forms a coiled coil. Residues 206 to 268 (DEQAIRHERA…KSAEKELIKA (63 aa)) enclose the t-SNARE coiled-coil homology domain. The helical; Anchor for type IV membrane protein transmembrane segment at 280-300 (FICFLILLIVALIVILAIKLL) threads the bilayer. R301 is a topological domain (vesicular).

This sequence belongs to the syntaxin family.

The protein localises to the golgi apparatus. The protein resides in the trans-Golgi network membrane. It localises to the endosome membrane. Its function is as follows. t-SNARE that functions in transport from the endosome to the late Golgi and on the endocytic pathway. This Schizosaccharomyces pombe (strain 972 / ATCC 24843) (Fission yeast) protein is t-SNARE affecting a late Golgi compartment protein 2 (tlg2).